The sequence spans 336 residues: Probable assembly chaperone of rpl4 (336 aa).

TPR repeat units lie at residues 39-72 (GRAF…SKNL), 75-108 (DQGY…LERL), 110-143 (IDKG…QPDA), and 162-195 (AEAL…ISRA). The interval 316 to 336 (DEENEEAEWETSENEEEMDED) is disordered.

The protein belongs to the ACL4 family.

The protein resides in the cytoplasm. It is found in the nucleus. Its subcellular location is the nucleolus. Functionally, acts as a chaperone for the L4 ribosomal subunit encoded by rpl4A and rpl4B, required for hierarchical ribosome assembly. Shields ribosomal protein L4 until timely release and insertion into the pre-ribosome is possible, once ribosomal protein L18 is present. In Schizosaccharomyces pombe (strain 972 / ATCC 24843) (Fission yeast), this protein is Probable assembly chaperone of rpl4.